A 169-amino-acid chain; its full sequence is Cell division inhibitor SulA (169 aa).

The tract at residues 106–112 (ALRTGNY) is ftsZ binding. The interval 162–169 (KIHSNLYH) is lon protease binding.

It belongs to the SulA family. As to quaternary structure, interacts with FtsZ. Post-translationally, is rapidly cleaved and degraded by the Lon protease once DNA damage is repaired.

In terms of biological role, component of the SOS system and an inhibitor of cell division. Accumulation of SulA causes rapid cessation of cell division and the appearance of long, non-septate filaments. In the presence of GTP, binds a polymerization-competent form of FtsZ in a 1:1 ratio, thus inhibiting FtsZ polymerization and therefore preventing it from participating in the assembly of the Z ring. This mechanism prevents the premature segregation of damaged DNA to daughter cells during cell division. In Salmonella dublin (strain CT_02021853), this protein is Cell division inhibitor SulA.